Here is a 534-residue protein sequence, read N- to C-terminus: Cytochrome c oxidase subunit 1 (534 aa).

A helical transmembrane segment spans residues 16-36; sequence VLYFMLAIFSGMAGTAMSLII. Glu39, Ala42, and Gly44 together coordinate Ca(2+). 6 consecutive transmembrane segments (helical) span residues 57–77, 101–121, 147–167, 182–202, 235–255, and 267–287; these read VLVV…ALIG, IAFW…LVES, AIFA…NFIV, LPLF…SLPV, LFYF…FGII, and VFGE…GFLV. His62 is a Fe(II)-heme a binding site. His241 is a binding site for Cu cation. The 1'-histidyl-3'-tyrosine (His-Tyr) cross-link spans 241–245; the sequence is HPEVY. Residue Tyr245 participates in O2 binding. Positions 290 and 291 each coordinate Cu cation. A run of 2 helical transmembrane segments spans residues 310–330 and 338–358; these read MIIA…IYGG and MLYA…GVAL. His368 and Asp369 together coordinate Mg(2+). The next 2 membrane-spanning stretches (helical) occupy residues 372–392 and 414–434; these read YVVG…LFAG and FWLI…LGIN. Heme a3 is bound at residue His376. Fe(II)-heme a is bound at residue His378. Pro441 is a binding site for Ca(2+). Residues 452 to 472 form a helical membrane-spanning segment; that stretch reads YVASIGSFIATLSLFLFIYIL.

This sequence belongs to the heme-copper respiratory oxidase family. As to quaternary structure, component of the cytochrome c oxidase (complex IV, CIV), a multisubunit enzyme composed of a catalytic core of 3 subunits and several supernumerary subunits. The complex exists as a monomer or a dimer and forms supercomplexes (SCs) in the inner mitochondrial membrane with ubiquinol-cytochrome c oxidoreductase (cytochrome b-c1 complex, complex III, CIII). Heme is required as a cofactor. Cu cation serves as cofactor.

The protein resides in the mitochondrion inner membrane. It catalyses the reaction 4 Fe(II)-[cytochrome c] + O2 + 8 H(+)(in) = 4 Fe(III)-[cytochrome c] + 2 H2O + 4 H(+)(out). Its pathway is energy metabolism; oxidative phosphorylation. Component of the cytochrome c oxidase, the last enzyme in the mitochondrial electron transport chain which drives oxidative phosphorylation. The respiratory chain contains 3 multisubunit complexes succinate dehydrogenase (complex II, CII), ubiquinol-cytochrome c oxidoreductase (cytochrome b-c1 complex, complex III, CIII) and cytochrome c oxidase (complex IV, CIV), that cooperate to transfer electrons derived from NADH and succinate to molecular oxygen, creating an electrochemical gradient over the inner membrane that drives transmembrane transport and the ATP synthase. Cytochrome c oxidase is the component of the respiratory chain that catalyzes the reduction of oxygen to water. Electrons originating from reduced cytochrome c in the intermembrane space (IMS) are transferred via the dinuclear copper A center (CU(A)) of subunit 2 and heme A of subunit 1 to the active site in subunit 1, a binuclear center (BNC) formed by heme A3 and copper B (CU(B)). The BNC reduces molecular oxygen to 2 water molecules using 4 electrons from cytochrome c in the IMS and 4 protons from the mitochondrial matrix. This Saccharomyces paradoxus (Yeast) protein is Cytochrome c oxidase subunit 1 (COXI).